We begin with the raw amino-acid sequence, 2193 residues long: Highly reducing polyketide synthase VdtX (2193 aa).

Residues 1-417 (MAICGIAVRL…GVNAHVIIES (417 aa)) enclose the Ketosynthase family 3 (KS3) domain. Catalysis depends on for beta-ketoacyl synthase activity residues Cys-170, His-306, and His-340. The segment at 513–809 (VFAGQGAQWP…HPYVPCLIRF (297 aa)) is malonyl-CoA:ACP transacylase (MAT) domain. The N-terminal hotdog fold stretch occupies residues 877–1001 (HELLGTRVVD…GEVAQENLSR (125 aa)). The segment at 877-1128 (HELLGTRVVD…DIVLRPLGAN (252 aa)) is dehydratase (DH) domain. One can recognise a PKS/mFAS DH domain in the interval 877-1202 (HELLGTRVVD…LQRQPKPSSE (326 aa)). His-909 serves as the catalytic Proton acceptor; for dehydratase activity. The segment at 1032–1202 (SVTSNTVSGR…LQRQPKPSSE (171 aa)) is C-terminal hotdog fold. Residue Asp-1093 is the Proton donor; for dehydratase activity of the active site. The methyltransferase (CMet) domain stretch occupies residues 1256–1390 (NYLNEPQQRI…DRWDSILKAA (135 aa)). An enoyl reductase (ER) domain region spans residues 1575–1783 (GQQVQLLGDD…SGQHIGQLRL (209 aa)). A ketoreductase (KR) domain region spans residues 1807–1981 (ASYLLVGGLG…ASVIDIGEVQ (175 aa)). The Carrier domain maps to 2102–2183 (PSATQFVSLE…AMGEHVIREL (82 aa)). Ser-2143 is modified (O-(pantetheine 4'-phosphoryl)serine).

In terms of biological role, highly reducing polyketide synthase; part of the gene cluster that mediates the biosynthesis of viriditoxin, one of the 'classical' secondary metabolites produced by fungi and that has antibacterial activity. The first step is performed by the polyketide synthase VdtA which condenses one acetyl-CoA and 6 malonyl-CoA units to form the heptaketide monomer backbone of viriditoxin. The product of VdtA is then O-methylated on C7 by the O-methyltransferase VdtC. The O-methyl group is important for the stereoselective coupling of the monomers at the final step of viriditoxin biosynthesis. The short-chain dehydrogenase/reductase VdtF is involved in the reduction of the C3-C4 double bond. The FAD-binding monooxygenase VdtE then converts the ketone group into a methyl-ester group to yield semi-viriditoxin. Finally, the laccase VdtB is involved in dimerization of 2 semi-viriditoxin molecules to yield the final viriditoxin. The non-catalytic carboxylesterase-like protein VdtD affects the stereochemistical outcome of the coupling. The highly reducing polyketide synthase VdtX is not involved in viriditoxin synthesis, but might possibly play a role in the production of additional metabolites not identified yet. The polypeptide is Highly reducing polyketide synthase VdtX (Byssochlamys spectabilis (Paecilomyces variotii)).